The sequence spans 669 residues: DNA ligase (669 aa).

NAD(+) contacts are provided by residues 32 to 36 (DAEYD), 81 to 82 (SL), and glutamate 113. The active-site N6-AMP-lysine intermediate is the lysine 115. Arginine 136, glutamate 173, lysine 290, and lysine 314 together coordinate NAD(+). Cysteine 408, cysteine 411, cysteine 426, and cysteine 432 together coordinate Zn(2+). Residues 592 to 669 (AVDSALAGKI…DEQALIEFLK (78 aa)) enclose the BRCT domain.

The protein belongs to the NAD-dependent DNA ligase family. LigA subfamily. Mg(2+) is required as a cofactor. Requires Mn(2+) as cofactor.

The catalysed reaction is NAD(+) + (deoxyribonucleotide)n-3'-hydroxyl + 5'-phospho-(deoxyribonucleotide)m = (deoxyribonucleotide)n+m + AMP + beta-nicotinamide D-nucleotide.. Its function is as follows. DNA ligase that catalyzes the formation of phosphodiester linkages between 5'-phosphoryl and 3'-hydroxyl groups in double-stranded DNA using NAD as a coenzyme and as the energy source for the reaction. It is essential for DNA replication and repair of damaged DNA. The polypeptide is DNA ligase (Vibrio cholerae serotype O1 (strain ATCC 39541 / Classical Ogawa 395 / O395)).